The chain runs to 349 residues: 4-hydroxythreonine-4-phosphate dehydrogenase (349 aa).

Substrate contacts are provided by histidine 141 and threonine 142. A divalent metal cation-binding residues include histidine 176, histidine 221, and histidine 276. The substrate site is built by lysine 284, asparagine 293, and arginine 302.

It belongs to the PdxA family. As to quaternary structure, homodimer. Zn(2+) is required as a cofactor. Mg(2+) serves as cofactor. The cofactor is Co(2+).

It localises to the cytoplasm. The enzyme catalyses 4-(phosphooxy)-L-threonine + NAD(+) = 3-amino-2-oxopropyl phosphate + CO2 + NADH. The protein operates within cofactor biosynthesis; pyridoxine 5'-phosphate biosynthesis; pyridoxine 5'-phosphate from D-erythrose 4-phosphate: step 4/5. In terms of biological role, catalyzes the NAD(P)-dependent oxidation of 4-(phosphooxy)-L-threonine (HTP) into 2-amino-3-oxo-4-(phosphooxy)butyric acid which spontaneously decarboxylates to form 3-amino-2-oxopropyl phosphate (AHAP). The polypeptide is 4-hydroxythreonine-4-phosphate dehydrogenase (Methylorubrum extorquens (strain CM4 / NCIMB 13688) (Methylobacterium extorquens)).